The primary structure comprises 651 residues: Acetyl-coenzyme A synthetase (651 aa).

CoA is bound by residues 189–192, threonine 311, and asparagine 335; that span reads RGGK. ATP contacts are provided by residues 387–389, 411–416, aspartate 500, and arginine 515; these read GEP and DTWWQT. Serine 523 contributes to the CoA binding site. Arginine 526 contributes to the ATP binding site. Mg(2+) contacts are provided by valine 537, histidine 539, and valine 542. Residue arginine 584 coordinates CoA. Lysine 609 carries the post-translational modification N6-acetyllysine.

This sequence belongs to the ATP-dependent AMP-binding enzyme family. The cofactor is Mg(2+). Acetylated. Deacetylation by the SIR2-homolog deacetylase activates the enzyme.

It catalyses the reaction acetate + ATP + CoA = acetyl-CoA + AMP + diphosphate. Catalyzes the conversion of acetate into acetyl-CoA (AcCoA), an essential intermediate at the junction of anabolic and catabolic pathways. AcsA undergoes a two-step reaction. In the first half reaction, AcsA combines acetate with ATP to form acetyl-adenylate (AcAMP) intermediate. In the second half reaction, it can then transfer the acetyl group from AcAMP to the sulfhydryl group of CoA, forming the product AcCoA. The polypeptide is Acetyl-coenzyme A synthetase (Rhizobium etli (strain CIAT 652)).